The primary structure comprises 343 residues: MATVAVALSGGVDSSTTALLMKEAGHRVFTLTMATNDRVAAEAARVSAFLGLPHHVLDISGLFEQRVIGPFCAAYLEGRTPNPCIACNRDLKYGTLFRQAVEWGADYFATGHYARVRFEPEPGRYVLLRARDPRKDQSYVLFYLDQERLARLLLPLGDLTKETVREKARAAGIPFTAAESQEICFVAGDDYRTFIRRRCGQAVAEGPFVDRQGNVLGRHRGIPFYTIGQRRGLGLALGRPVFVLGFNRERNAVIVGPEEELWHTAFLAVDVHYILPQPAGGTLIEAQIRYRAKAAPARLYPQPPDAARVVFEKPQRAITPGQAAVFYQGERVVGGGIISCAVR.

Residues 7–14 (ALSGGVDS) and Met-33 each bind ATP. Residue Cys-87 is the Nucleophile of the active site. An intrachain disulfide couples Cys-87 to Cys-184. Position 111 (Gly-111) interacts with ATP. The tract at residues 135 to 137 (KDQ) is interaction with tRNA. Residue Cys-184 is the Cysteine persulfide intermediate of the active site. Residues 289–290 (RY) are interaction with tRNA.

It belongs to the MnmA/TRMU family.

The protein localises to the cytoplasm. It carries out the reaction S-sulfanyl-L-cysteinyl-[protein] + uridine(34) in tRNA + AH2 + ATP = 2-thiouridine(34) in tRNA + L-cysteinyl-[protein] + A + AMP + diphosphate + H(+). In terms of biological role, catalyzes the 2-thiolation of uridine at the wobble position (U34) of tRNA, leading to the formation of s(2)U34. The protein is tRNA-specific 2-thiouridylase MnmA of Desulforudis audaxviator (strain MP104C).